The primary structure comprises 252 residues: MIKEAGAIISTRHCNPQNGDRCVAALARVECTHFLWPMCIGEVAHVSAEITYTSKHSVEVQVNMMSENILTGAKKLTNKATLWYAPLSLTNVDKVLEEPPVVYFRQEQEEEGQKRYKTQKLERMETNWRNGDIVQPVLNPEPNTVSYSQSSLIHLVGPSDCTLHSFVHEGVTMKVMDEVAGILAARHCKTNLVTASMEAINFDNKIRKGCIKTISGRMTFTSNKSVEIEVLVDADCVVDSSQKRYRAASVFT.

HotDog ACOT-type domains follow at residues 1-90 (MIKE…LSLT) and 146-252 (SYSQ…SVFT).

In terms of assembly, homodimer. Expressed in all tissues examined. Up-regulated in nasopharyngeal carcinoma (at protein level).

The protein resides in the cytoplasm. It catalyses the reaction hexadecanoyl-CoA + H2O = hexadecanoate + CoA + H(+). In terms of biological role, acyl-CoA thioesterases are a group of enzymes that catalyze the hydrolysis of acyl-CoAs to the free fatty acid and coenzyme A (CoASH), providing the potential to regulate intracellular levels of acyl-CoAs, free fatty acids and CoASH. This is Putative cytosolic acyl coenzyme A thioester hydrolase-like (ACOT7L) from Homo sapiens (Human).